Consider the following 418-residue polypeptide: Acyl-coenzyme A amino acid N-acyltransferase 2 (418 aa).

Active-site charge relay system residues include Ser-234, Asp-327, and His-361. The Microbody targeting signal motif lies at Gly-416–Leu-418.

The protein belongs to the C/M/P thioester hydrolase family.

It localises to the peroxisome. In terms of biological role, acyltransferase which efficiently conjugates very long-chain and long-chain fatty acids to taurine. Shows no conjugation activity in the presence of glycine. The protein is Acyl-coenzyme A amino acid N-acyltransferase 2 of Rattus norvegicus (Rat).